The sequence spans 385 residues: MATTASNHYNLLGSGSSIVHADPGGMQQAQSYRDAQTLVQSDYTLQSNGHPLSHAHQWITALSHGDGAPWATSPLGQQDIKPTVQSSRDELHGSGTLQHQSRAPHLVHPAHGNHHGPGAWRSTGSTHLSSMASSNGQGLLYSQPSFTVNGMINPGSGQGMHHHGLRDSHDDHHGDHGHQQPSQTQQQQQQHSQLQGGHHDHSDEDTPTSDDLEQFAKQFKQRRIKLGFTQADVGLALGTLYGNVFSQTTICRFEALQLSFKNMCKLKPLLNKWLEEADSSSGSPTSIDKIAAQGRKRKKRTSIEVSVKGALESHFLKCPKPAAQEITSLADSLQLEKEVVRVWFCNRRQKEKRMTPPGGTIPGAEDVYGASRDTPPHLGVQTSVQ.

Disordered stretches follow at residues 106 to 136 (LVHPAHGNHHGPGAWRSTGSTHLSSMASSNG), 149 to 209 (NGMI…TPTS), and 351 to 385 (EKRMTPPGGTIPGAEDVYGASRDTPPHLGVQTSVQ). Positions 122–136 (STGSTHLSSMASSNG) are enriched in polar residues. The span at 165 to 178 (LRDSHDDHHGDHGH) shows a compositional bias: basic and acidic residues. Low complexity predominate over residues 179-196 (QQPSQTQQQQQQHSQLQG). Residues 204-278 (EDTPTSDDLE…LLNKWLEEAD (75 aa)) enclose the POU-specific domain. A DNA-binding region (homeobox) is located at residues 296 to 355 (KRKKRTSIEVSVKGALESHFLKCPKPAAQEITSLADSLQLEKEVVRVWFCNRRQKEKRMT).

This sequence belongs to the POU transcription factor family. Class-3 subfamily. As to expression, expressed in the developing brain and spinal cord. Also found in a restricted region of the auditory vesicle during development. In the adult, expression is restricted to the brain.

Its subcellular location is the nucleus. Transcription factor that may be implicated in patterning of the central nervous system during early development. This is POU domain, class 3, transcription factor 2-B (pou3f2-b) from Xenopus laevis (African clawed frog).